The sequence spans 751 residues: Polyadenylate-binding protein, cytoplasmic and nuclear (751 aa).

2 stretches are compositionally biased toward polar residues: residues 1 to 26 and 36 to 50; these read MSAEVSTTPAADNTVNGTPEATNPAA and ESASPSATPSANQPH. The tract at residues 1 to 50 is disordered; it reads MSAEVSTTPAADNTVNGTPEATNPAATSAPEVTAVESASPSATPSANQPH. RRM domains lie at 52-130, 140-217, 233-310, and 336-458; these read ASLY…WSQR, GNVF…HHIS, TNVY…RAQK, and VNLY…LAQR. Disordered regions lie at residues 371-413 and 601-643; these read TVTA…KKTE and GQGM…REEV. Over residues 379–413 the composition is skewed to basic and acidic residues; that stretch reads ESEKEKESNKENEKEGEEKTEEKPKESEEEAKKTE. Positions 603–629 are enriched in gly residues; the sequence is GMRGPGYGQGRGGAPVQGGPRPQGGRG. Residues 646–723 enclose the PABC domain; it reads TGGLTAQTLN…ALSVYDEYMK (78 aa). The tract at residues 725-751 is disordered; that stretch reads KGEGEAPAEPAKPKEDAAETATEENKS. The segment covering 735–751 has biased composition (basic and acidic residues); the sequence is AKPKEDAAETATEENKS.

The protein belongs to the polyadenylate-binding protein type-1 family.

Its subcellular location is the cytoplasm. The protein localises to the nucleus. Its function is as follows. Binds the poly(A) tail of mRNA. Appears to be an important mediator of the multiple roles of the poly(A) tail in mRNA biogenesis, stability and translation. In the nucleus, involved in both mRNA cleavage and polyadenylation. Is also required for efficient mRNA export to the cytoplasm. Acts in concert with a poly(A)-specific nuclease (PAN) to affect poly(A) tail shortening, which may occur concomitantly with either nucleocytoplasmic mRNA transport or translational initiation. In the cytoplasm, stimulates translation initiation and regulates mRNA decay through translation termination-coupled poly(A) shortening, probably mediated by PAN. The polypeptide is Polyadenylate-binding protein, cytoplasmic and nuclear (pab1) (Neosartorya fischeri (strain ATCC 1020 / DSM 3700 / CBS 544.65 / FGSC A1164 / JCM 1740 / NRRL 181 / WB 181) (Aspergillus fischerianus)).